Consider the following 426-residue polypeptide: Flotillin-1 (426 aa).

The protein belongs to the band 7/mec-2 family. Flotillin subfamily. Heterooligomeric complex of flotillins 1 and 2 and caveolins 1 and 2. Expressed in brain and ventral nerve cord from stage 12-16 of embryogenesis.

It localises to the cell membrane. Its subcellular location is the membrane. The protein resides in the caveola. May act as a scaffolding protein within caveolar membranes, functionally participating in formation of caveolae or caveolae-like vesicles. This Drosophila melanogaster (Fruit fly) protein is Flotillin-1.